Reading from the N-terminus, the 173-residue chain is uncharacterized protein (173 aa).

The next 4 helical transmembrane spans lie at 13 to 35, 50 to 72, 107 to 129, and 139 to 161; these read LQVI…PLLS, IIFI…FLGL, NYLI…KYLL, and GYLI…RLIL.

It localises to the cell membrane. This is an uncharacterized protein from Rickettsia prowazekii (strain Madrid E).